We begin with the raw amino-acid sequence, 429 residues long: Enolase (429 aa).

(2R)-2-phosphoglycerate is bound at residue glutamine 168. The Proton donor role is filled by glutamate 210. Mg(2+) contacts are provided by aspartate 247, glutamate 288, and aspartate 315. 4 residues coordinate (2R)-2-phosphoglycerate: lysine 340, arginine 369, serine 370, and lysine 391. Lysine 340 functions as the Proton acceptor in the catalytic mechanism.

This sequence belongs to the enolase family. Requires Mg(2+) as cofactor.

The protein resides in the cytoplasm. It is found in the secreted. The protein localises to the cell surface. The enzyme catalyses (2R)-2-phosphoglycerate = phosphoenolpyruvate + H2O. Its pathway is carbohydrate degradation; glycolysis; pyruvate from D-glyceraldehyde 3-phosphate: step 4/5. In terms of biological role, catalyzes the reversible conversion of 2-phosphoglycerate (2-PG) into phosphoenolpyruvate (PEP). It is essential for the degradation of carbohydrates via glycolysis. The polypeptide is Enolase (Nostoc punctiforme (strain ATCC 29133 / PCC 73102)).